The sequence spans 40 residues: Bomanin Short 6 (40 aa).

The N-terminal stretch at 1–18 is a signal peptide; it reads MKLLSITFLFGLLALASA. The propeptide at 19 to 23 is removed by a dipeptidylpeptidase; that stretch reads NPLSP. A disulfide bridge connects residues C32 and C35.

This sequence belongs to the bomanin family.

It is found in the secreted. Functionally, secreted immune-induced peptide induced by Toll signaling. Has a role in resistance to bacterial and fungal infections. The strength of antimicrobial activity appears to correlate with the overall level of expression. The polypeptide is Bomanin Short 6 (Drosophila melanogaster (Fruit fly)).